We begin with the raw amino-acid sequence, 247 residues long: Caffeoyl-CoA O-methyltransferase 2 (247 aa).

Lys-21 serves as a coordination point for substrate. Residues Thr-63, Glu-85, 87–88 (GV), Ser-93, Asp-111, and Ala-140 each bind S-adenosyl-L-methionine. Asp-163 contacts substrate. Asp-163 provides a ligand contact to a divalent metal cation. Residue Asp-165 participates in S-adenosyl-L-methionine binding. Positions 189 and 190 each coordinate a divalent metal cation. Asn-194 contributes to the substrate binding site.

It belongs to the class I-like SAM-binding methyltransferase superfamily. Cation-dependent O-methyltransferase family. CCoAMT subfamily. It depends on a divalent metal cation as a cofactor.

The enzyme catalyses (E)-caffeoyl-CoA + S-adenosyl-L-methionine = (E)-feruloyl-CoA + S-adenosyl-L-homocysteine + H(+). The protein operates within aromatic compound metabolism; phenylpropanoid biosynthesis. Methylates caffeoyl-CoA to feruloyl-CoA and 5-hydroxyferuloyl-CoA to sinapoyl-CoA. Plays a role in the synthesis of feruloylated polysaccharides. Involved in the reinforcement of the plant cell wall. Also involved in the responding to wounding or pathogen challenge by the increased formation of cell wall-bound ferulic acid polymers. This chain is Caffeoyl-CoA O-methyltransferase 2 (CCOAOMT2), found in Eucalyptus globulus (Tasmanian blue gum).